The primary structure comprises 131 residues: Glycine cleavage system H protein (131 aa).

The Lipoyl-binding domain occupies 24–106; it reads RVTVGISDHA…YGEGWIFVVE (83 aa). Position 65 is an N6-lipoyllysine (Lys-65).

The protein belongs to the GcvH family. In terms of assembly, the glycine cleavage system is composed of four proteins: P, T, L and H. The cofactor is (R)-lipoate.

The glycine cleavage system catalyzes the degradation of glycine. The H protein shuttles the methylamine group of glycine from the P protein to the T protein. This chain is Glycine cleavage system H protein, found in Xanthomonas campestris pv. campestris (strain 8004).